Reading from the N-terminus, the 1058-residue chain is UPF0507 protein YALI0E18612g (1058 aa).

A VPS9 domain is found at 252–394 (TNEDGPLDQA…IGENREQLEA (143 aa)).

Belongs to the UPF0507 family.

The chain is UPF0507 protein YALI0E18612g from Yarrowia lipolytica (strain CLIB 122 / E 150) (Yeast).